Consider the following 267-residue polypeptide: 4-hydroxy-tetrahydrodipicolinate reductase (267 aa).

Residues 8 to 13 (GAAGRM) and Asp34 contribute to the NAD(+) site. NADP(+) is bound at residue Arg35. Residues 98-100 (GTT) and 122-125 (AANF) each bind NAD(+). Residue His155 is the Proton donor/acceptor of the active site. Residue His156 participates in (S)-2,3,4,5-tetrahydrodipicolinate binding. The active-site Proton donor is the Lys159. A (S)-2,3,4,5-tetrahydrodipicolinate-binding site is contributed by 165–166 (GT).

Belongs to the DapB family.

The protein resides in the cytoplasm. The enzyme catalyses (S)-2,3,4,5-tetrahydrodipicolinate + NAD(+) + H2O = (2S,4S)-4-hydroxy-2,3,4,5-tetrahydrodipicolinate + NADH + H(+). The catalysed reaction is (S)-2,3,4,5-tetrahydrodipicolinate + NADP(+) + H2O = (2S,4S)-4-hydroxy-2,3,4,5-tetrahydrodipicolinate + NADPH + H(+). The protein operates within amino-acid biosynthesis; L-lysine biosynthesis via DAP pathway; (S)-tetrahydrodipicolinate from L-aspartate: step 4/4. Catalyzes the conversion of 4-hydroxy-tetrahydrodipicolinate (HTPA) to tetrahydrodipicolinate. The protein is 4-hydroxy-tetrahydrodipicolinate reductase of Pseudomonas savastanoi pv. phaseolicola (strain 1448A / Race 6) (Pseudomonas syringae pv. phaseolicola (strain 1448A / Race 6)).